Reading from the N-terminus, the 555-residue chain is Capsid vertex component 2 (555 aa).

Residues 1–47 are interaction with major capsid protein/MCP; that stretch reads MAQCNLFYQYPITPILEGHVRNILICTEKDVEKLQSQSSLRLREKID.

This sequence belongs to the herpesviridae CVC2 protein family. In terms of assembly, heterodimerizes with CVC1. Interacts with major capsid protein/MCP and triplex capsid protein 1/TRX1 at the pentamer vertices. Interacts with the large tegument protein/LTP.

It is found in the virion. Its subcellular location is the host nucleus. Capsid vertex-specific component that plays a role during viral DNA encapsidation, assuring correct genome cleavage and presumably stabilizing capsids that contain full-length viral genomes. Participates in the interaction between the capsid and the tegument through interaction with the large tegument protein/LTP. In Homo sapiens (Human), this protein is Capsid vertex component 2.